A 465-amino-acid chain; its full sequence is Indoleacetamide hydrolase (465 aa).

Residues 1-40 are disordered; that stretch reads MVRGRHRSRDPQRRDLRGRDRRSASRTDARRQSAAERGCR. The span at 9–39 shows a compositional bias: basic and acidic residues; it reads RDPQRRDLRGRDRRSASRTDARRQSAAERGC. Catalysis depends on serine 149, which acts as the Charge relay system. The active-site Acyl-ester intermediate is serine 173.

This sequence belongs to the amidase family.

It functions in the pathway plant hormone metabolism; auxin biosynthesis. Its function is as follows. Hydrolyzes indole-3-acetamide (IAM) into indole-3-acetic acid (IAA). The chain is Indoleacetamide hydrolase (bam) from Bradyrhizobium japonicum.